The chain runs to 391 residues: Tyrosinase-like protein phomQ2 (391 aa).

The disordered stretch occupies residues 1–21 (MDNVGCEASSSRDPKGKKAVG). The chain crosses the membrane as a helical span at residues 61–81 (IRGFICATIIFVVCLGALSYI). N-linked (GlcNAc...) asparagine glycosylation is found at Asn97 and Asn141. Residues His160 and His169 each contribute to the Cu cation site. 3 N-linked (GlcNAc...) asparagine glycosylation sites follow: Asn204, Asn246, and Asn261. Positions 298 and 324 each coordinate Cu cation. N-linked (GlcNAc...) asparagine glycosylation occurs at Asn353.

It belongs to the tyrosinase family. Cu(2+) is required as a cofactor.

Its subcellular location is the membrane. The protein operates within mycotoxin biosynthesis. Tyrosinase-like protein; part of the gene cluster that mediates the biosynthesis of the phomopsins, a group of hexapeptide mycotoxins which infects lupins and causes lupinosis disease in livestock. Within the pathway, phomQ2 is involved in the generation of the common 13-membered macrocycle, possibly by catalyzing the hydroxylation of Tyr. The pathway starts with the processing of the precursor phomA by several endopeptidases including kexin proteases as well as the cluster-specific S41 family peptidase phomP1 and the oligopeptidase phomG to produce 10 identical copies of the hexapeptide Tyr-Val-Ile-Pro-Ile-Asp. After being excised from the precursor peptide, the core peptides are cyclized and modified post-translationally by enzymes encoded within the gene cluster. The timing and order of proteolysis of the phomA precursor and PTMs are still unknown. Two tyrosinase-like enzymes, phomQ1 and phomQ2, catalyze the chlorination and hydroxylation of Tyr, respectively. PhomYb, is proposed to be involved in the construction of the macrocyclic structure. The other 4 ustYa family proteins may be involved in PTMs that generate the unique structure of phomopsin A. PhomYa is required for the hydroxylation of C-beta of Tyr. PhomYc, phomYd, and phomYe are responsible for the biosynthesis of 2,3-dehydroisoleucine (dIle), 2,3-dehydroaspartic acid (dAsp), and 3,4-dehydroproline (dPro), respectively. While dIle formation by phomYc is indispensable for the installation of dAsp by phomYd, the order of the other PTMs have not been elucidated yet. Most of the biosynthetic enzymes likely have broad substrate specificity, and thus, there might be a metabolic grid from a precursor to phomopsin A. The enzyme(s) responsible for the biosynthesis of 3,4-dehydrovaline (dVal) have also not been identified yet. Finally, phomM acts as an S-adenosylmethionine-dependent alpha-N-methyltransferase that catalyzes two successive N-methylation reactions, converting N-desmethyl-phomopsin A to phomopsin A and phomopsin A further to an N,N-dimethylated congener called phomopsin E. In Diaporthe leptostromiformis (Lupinosis disease fungus), this protein is Tyrosinase-like protein phomQ2.